The primary structure comprises 618 residues: MPRSRGGRAAPGQAARWSGWRAPGRLLPLLPALCCLAAAAGAGKPAGADAPFAGQNWLKSYGYLLPYESRASALHSGKALQSAVSTMQQFYGIPVTGVLDQTTIEWMKKPRCGVPDHPHLSRRRRNKRYALTGQKWRQKHITYSIHNYTPKVGELDTRKAIRQAFDVWQKVTPLTFEEVPYHEIKSDRKEADIMIFFASGFHGDSSPFDGEGGFLAHAYFPGPGIGGDTHFDSDEPWTLGNANHDGNDLFLVAVHELGHALGLEHSNDPSAIMAPFYQYMETHNFKLPQDDLQGIQKIYGPPAEPLEPTRPLPTLPVRRIHSPSERKHERQPRPPRPPLGDRPSTPGAKPNICDGNFNTVALFRGEMFVFKDRWFWRLRNNRVQEGYPMQIEQFWKGLPARIDAAYERADGRFVFFKGDKYWVFKEVTVEPGYPHSLGELGSCLPREGIDTALRWEPVGKTYFFKGERYWRYSEERRATDPGYPKPITVWKGIPQAPQGAFISKEGYYTYFYKGRDYWKFDNQKLSVEPGYPRNILRDWMGCKQKEVERRKERRLPQDDVDIMVTIDDVPGSVNAVAVVVPCTLSLCLLVLLYTIFQFKNKTGPQPVTYYKRPVQEWV.

An N-terminal signal peptide occupies residues 1–41 (MPRSRGGRAAPGQAARWSGWRAPGRLLPLLPALCCLAAAAG). A propeptide spanning residues 42–128 (AGKPAGADAP…HLSRRRRNKR (87 aa)) is cleaved from the precursor. Residues 42–575 (AGKPAGADAP…IDDVPGSVNA (534 aa)) are Extracellular-facing. The Cysteine switch signature appears at 110-117 (PRCGVPDH). Zn(2+) contacts are provided by Cys-112 and His-255. Residue Glu-256 is part of the active site. His-259 and His-265 together coordinate Zn(2+). A disordered region spans residues 296–352 (QKIYGPPAEPLEPTRPLPTLPVRRIHSPSERKHERQPRPPRPPLGDRPSTPGAKPNI). A compositionally biased stretch (pro residues) spans 302–314 (PAEPLEPTRPLPT). Positions 322–332 (SPSERKHERQP) are enriched in basic and acidic residues. Hemopexin repeat units follow at residues 350–398 (PNIC…WKGL), 399–444 (PARI…GSCL), 446–494 (REGI…KGIP), and 495–542 (QAPQ…WMGC). Cys-353 and Cys-542 are joined by a disulfide. The chain crosses the membrane as a helical span at residues 576–596 (VAVVVPCTLSLCLLVLLYTIF). At 597 to 618 (QFKNKTGPQPVTYYKRPVQEWV) the chain is on the cytoplasmic side. Positions 616 to 618 (EWV) match the PDZ-binding motif.

This sequence belongs to the peptidase M10A family. In terms of assembly, interacts (via PDZ-binding motif) with APBA3 (via PDZ domain). Interacts with GRIP1 and GRIP2. The cofactor is Zn(2+). Requires Ca(2+) as cofactor. Cleaved by a furin endopeptidase in the trans-Golgi network. As to expression, predominantly expressed in the nervous system: while enriched in the central nervous system, expression is also detected in the peripheral nervous system, including the trigeminal ganglion. Expression is not restricted to the nervous system: it is also enriched in the thymus, with a lower level of expression present in the aorta. In brain, high expression is present in the brain parenchyma, particularly within the neocortex.

It localises to the cell membrane. Its subcellular location is the golgi apparatus. It is found in the trans-Golgi network membrane. The protein localises to the secreted. The protein resides in the extracellular space. It localises to the extracellular matrix. Metalloprotease that mediates cleavage of N-cadherin (CDH2) and acts as a regulator of neuro-immune interactions and neural stem cell quiescence. Involved in cell-cell interactions between nociceptive neurites and mast cells, possibly by mediating cleavage of CDH2, thereby acting as a mediator of peripheral thermal nociception and inflammatory hyperalgesia. Key regulator of neural stem cells quiescence by mediating cleavage of CDH2, affecting CDH2-mediated anchorage of neural stem cells to ependymocytes in the adult subependymal zone, leading to modulate their quiescence. May play a role in axonal growth. Able to activate progelatinase A. May also be a proteoglycanase involved in degradation of proteoglycans, such as dermatan sulfate and chondroitin sulfate proteoglycans. Cleaves partially fibronectin, but not collagen type I, nor laminin. The protein is Matrix metalloproteinase-24 (Mmp24) of Rattus norvegicus (Rat).